Consider the following 304-residue polypeptide: MKLRHLEIFYTVMTCGSLSRAAESLNISQPAASKSLKNAELKLGFKLFQRVRGKLLPSREALELFEKAQGIYQDLSNLRLLADNLARDPRAKFTLGCLPCLGLSLVPEIATDFYQQNSNLVMTLTAEHTETLVKKLDLREIDLALTMQPVQQGDIMATLIAEVPLVYVDKDYRQGAVEIDSIDQQRWISPGLDSLSTAIAAHRVFPATGLNVETCYMAMEFVKRGVGCCITDIFSARHSLTPEMIHQISPPMKIDLYLLRRADASLSPVTQKFVDFLCKRLRNELREINLELYPGNKKSIVSPV.

An HTH lysR-type domain is found at 1 to 58; that stretch reads MKLRHLEIFYTVMTCGSLSRAAESLNISQPAASKSLKNAELKLGFKLFQRVRGKLLPS. Positions 18–37 form a DNA-binding region, H-T-H motif; the sequence is LSRAAESLNISQPAASKSLK.

The protein belongs to the LysR transcriptional regulatory family.

It localises to the cytoplasm. With respect to regulation, admX-mediated transcription is inhibited by indole-3-acetic and indole-3-pyruvic acids. AdmX recognizes and binds the auxin indole-3-acetic acid (IAA), which causes conformational changes in AdmX that result in the inhibition of the expression of the andrimid gene cluster and the suppression of antibiotic production. It also recognizes indole-3-pyruvic acid (IPA), an intermediate of the main IAA biosynthetic pathway in plants and plant beneficial bacteria, which also prevents andrimid synthesis, but to a much lesser extent. Positively regulates the biosynthesis of andrimid, a broad-spectrum antibiotic, by activating the expression of the adm biosynthetic gene cluster. It specifically binds to a region within the adm promoter. The sequence is that of HTH-type transcriptional regulator AdmX from Serratia plymuthica.